Consider the following 192-residue polypeptide: Nucleoside triphosphate pyrophosphatase (192 aa).

Residue aspartate 73 is the Proton acceptor of the active site.

The protein belongs to the Maf family. The cofactor is a divalent metal cation.

The protein localises to the cytoplasm. The catalysed reaction is a ribonucleoside 5'-triphosphate + H2O = a ribonucleoside 5'-phosphate + diphosphate + H(+). The enzyme catalyses a 2'-deoxyribonucleoside 5'-triphosphate + H2O = a 2'-deoxyribonucleoside 5'-phosphate + diphosphate + H(+). Its function is as follows. Nucleoside triphosphate pyrophosphatase. May have a dual role in cell division arrest and in preventing the incorporation of modified nucleotides into cellular nucleic acids. In Ehrlichia ruminantium (strain Welgevonden), this protein is Nucleoside triphosphate pyrophosphatase.